A 332-amino-acid chain; its full sequence is Diaminopimelate epimerase (332 aa).

Substrate-binding residues include asparagine 13 and asparagine 73. Cysteine 82 serves as the catalytic Proton donor. Residues 83 to 84 (GN), asparagine 172, asparagine 209, and 227 to 228 (ER) contribute to the substrate site. Cysteine 236 serves as the catalytic Proton acceptor. Substrate is bound at residue 237 to 238 (GT).

It belongs to the diaminopimelate epimerase family. As to quaternary structure, homodimer.

It localises to the cytoplasm. The enzyme catalyses (2S,6S)-2,6-diaminopimelate = meso-2,6-diaminopimelate. Its pathway is amino-acid biosynthesis; L-lysine biosynthesis via DAP pathway; DL-2,6-diaminopimelate from LL-2,6-diaminopimelate: step 1/1. Catalyzes the stereoinversion of LL-2,6-diaminopimelate (L,L-DAP) to meso-diaminopimelate (meso-DAP), a precursor of L-lysine and an essential component of the bacterial peptidoglycan. The chain is Diaminopimelate epimerase from Lactiplantibacillus plantarum (strain ATCC BAA-793 / NCIMB 8826 / WCFS1) (Lactobacillus plantarum).